The sequence spans 696 residues: Glycosyltransferase GlyA (696 aa).

Positions 1–301 (MLVDDKITVI…NQLSRQEESE (301 aa)) are GT2 domain. The segment at 302 to 556 (KKAIVLAANY…TELGQNHHLH (255 aa)) is GT8 domain. UDP is bound by residues 308 to 313 (AANYGY) and 399 to 400 (DC). 3 residues coordinate Mn(2+): D399, D401, and H518. Position 518–524 (518–524 (HYLSHRK)) interacts with UDP.

The protein in the N-terminal section; belongs to the glycosyltransferase 2 family. This sequence in the central section; belongs to the glycosyltransferase 8 family.

Its pathway is protein modification; protein glycosylation. Involved in the polymorphic O-glycosylation of the serine-rich repeat protein PsrP. Catalyzes the fourth step in glycosylation of PsrP in this bacteria. Can transfer the sugar from UDP-galactose to the terminal sugar moiety of PsrP-GlcNAc-Glc-Gal or of PsrP-GlcNAc-Glc-Glc (using truncated substrates with the PsrP SSR1 domain). Has hydrolytic activity against UDP-galactose and to a lesser extent against UDP-glucose. The sequence is that of Glycosyltransferase GlyA from Streptococcus pneumoniae serotype 4 (strain ATCC BAA-334 / TIGR4).